Here is a 323-residue protein sequence, read N- to C-terminus: Lipoyl synthase (323 aa).

[4Fe-4S] cluster-binding residues include Cys61, Cys66, Cys72, Cys87, Cys91, Cys94, and Ser300. The Radical SAM core domain maps to 73–289 (WDKKHATFMI…ETVAYTKGFL (217 aa)).

The protein belongs to the radical SAM superfamily. Lipoyl synthase family. [4Fe-4S] cluster is required as a cofactor.

The protein localises to the cytoplasm. It catalyses the reaction [[Fe-S] cluster scaffold protein carrying a second [4Fe-4S](2+) cluster] + N(6)-octanoyl-L-lysyl-[protein] + 2 oxidized [2Fe-2S]-[ferredoxin] + 2 S-adenosyl-L-methionine + 4 H(+) = [[Fe-S] cluster scaffold protein] + N(6)-[(R)-dihydrolipoyl]-L-lysyl-[protein] + 4 Fe(3+) + 2 hydrogen sulfide + 2 5'-deoxyadenosine + 2 L-methionine + 2 reduced [2Fe-2S]-[ferredoxin]. It participates in protein modification; protein lipoylation via endogenous pathway; protein N(6)-(lipoyl)lysine from octanoyl-[acyl-carrier-protein]: step 2/2. Catalyzes the radical-mediated insertion of two sulfur atoms into the C-6 and C-8 positions of the octanoyl moiety bound to the lipoyl domains of lipoate-dependent enzymes, thereby converting the octanoylated domains into lipoylated derivatives. The sequence is that of Lipoyl synthase from Sinorhizobium medicae (strain WSM419) (Ensifer medicae).